Reading from the N-terminus, the 315-residue chain is Alpha- and gamma-adaptin-binding protein p34 (315 aa).

Residues 197–234 (IGSADPCHPEQPHLPAADSTESLSDHRGGASNTTDAQV) form a disordered region. Phosphoserine occurs at positions 310 and 311.

As to quaternary structure, associated with AP-1 and AP-2 complexes. As to expression, widely expressed, including in skin and keratinocytes, with highest levels in adrenal gland, rectum and thymus.

The protein localises to the cytoplasm. It localises to the cytosol. May be involved in endocytic recycling of growth factor receptors such as EGFR. This Homo sapiens (Human) protein is Alpha- and gamma-adaptin-binding protein p34 (AAGAB).